Here is a 364-residue protein sequence, read N- to C-terminus: Phosphoserine aminotransferase (364 aa).

Position 46 (arginine 46) interacts with L-glutamate. Pyridoxal 5'-phosphate is bound by residues 80-81, tryptophan 106, threonine 157, aspartate 176, and glutamine 199; that span reads AR. Lysine 200 bears the N6-(pyridoxal phosphate)lysine mark. 241-242 contacts pyridoxal 5'-phosphate; sequence NT.

Belongs to the class-V pyridoxal-phosphate-dependent aminotransferase family. SerC subfamily. In terms of assembly, homodimer. Pyridoxal 5'-phosphate is required as a cofactor.

Its subcellular location is the cytoplasm. The catalysed reaction is O-phospho-L-serine + 2-oxoglutarate = 3-phosphooxypyruvate + L-glutamate. The enzyme catalyses 4-(phosphooxy)-L-threonine + 2-oxoglutarate = (R)-3-hydroxy-2-oxo-4-phosphooxybutanoate + L-glutamate. Its pathway is amino-acid biosynthesis; L-serine biosynthesis; L-serine from 3-phospho-D-glycerate: step 2/3. It participates in cofactor biosynthesis; pyridoxine 5'-phosphate biosynthesis; pyridoxine 5'-phosphate from D-erythrose 4-phosphate: step 3/5. Catalyzes the reversible conversion of 3-phosphohydroxypyruvate to phosphoserine and of 3-hydroxy-2-oxo-4-phosphonooxybutanoate to phosphohydroxythreonine. This is Phosphoserine aminotransferase from Vibrio parahaemolyticus serotype O3:K6 (strain RIMD 2210633).